Consider the following 600-residue polypeptide: KIF-binding protein (600 aa).

Residues 384–434 (KAENEATEYSKIMQDYAEAYEHIAFFEENPENQAKMQKRRAKYLEDLLDLL) adopt a coiled-coil conformation.

The protein belongs to the KIF-binding protein family.

The protein resides in the cytoplasm. It localises to the cytoskeleton. In Drosophila melanogaster (Fruit fly), this protein is KIF-binding protein.